A 422-amino-acid chain; its full sequence is Pre-B-cell leukemia transcription factor 2 (422 aa).

The tract at residues 1–43 (MDEQGRLMQARGVGIPGHPIHGGPQTLTPHPMHEPPADNGEPR) is disordered. A compositionally biased stretch (basic and acidic residues) spans 31–43 (PMHEPPADNGEPR). A PBC domain is found at 42 to 236 (PRKQDIGDIL…VMILRSRFLD (195 aa)). The segment at 49-128 (DILQQIMTIT…EGVAGPEKGG (80 aa)) is PBC-A. A PBC-B region spans residues 131–236 (AAAAAAAAAS…VMILRSRFLD (106 aa)). Positions 237-299 (ARRKRRNFSK…NKRIRYKKNI (63 aa)) form a DNA-binding region, homeobox. Disordered stretches follow at residues 319-341 (QGGH…GSFN) and 353-422 (QGLN…DTSN). Over residues 401 to 410 (VTPSSVTSPT) the composition is skewed to polar residues.

This sequence belongs to the TALE/PBX homeobox family.

It is found in the nucleus. In terms of biological role, transcriptional activator that binds the sequence 5'-ATCAATCAA-3'. This is Pre-B-cell leukemia transcription factor 2 from Xenopus tropicalis (Western clawed frog).